A 250-amino-acid chain; its full sequence is NADH-quinone oxidoreductase subunit C (250 aa).

The protein belongs to the complex I 30 kDa subunit family. NDH-1 is composed of 14 different subunits. Subunits NuoB, C, D, E, F, and G constitute the peripheral sector of the complex.

The protein resides in the cell inner membrane. It carries out the reaction a quinone + NADH + 5 H(+)(in) = a quinol + NAD(+) + 4 H(+)(out). Its function is as follows. NDH-1 shuttles electrons from NADH, via FMN and iron-sulfur (Fe-S) centers, to quinones in the respiratory chain. The immediate electron acceptor for the enzyme in this species is believed to be ubiquinone. Couples the redox reaction to proton translocation (for every two electrons transferred, four hydrogen ions are translocated across the cytoplasmic membrane), and thus conserves the redox energy in a proton gradient. This Xylella fastidiosa (strain M23) protein is NADH-quinone oxidoreductase subunit C.